We begin with the raw amino-acid sequence, 1426 residues long: MGKTKIYSVGFTVHEAQTLVTEKGQPVDPLVVVRCCGREYRTEIKYAKSNVVSWDESHTWTDLCLTDEEWETAYITFEVQAANAFWRNTLLGLVSVQLRLIQLRKTHQIRKALPLQHPDDTDVHGSLRVTVFACAPGEAPPSPGEEEVLEEEDHNDYDDLRKAVIDTNQVVEREAGSRLYHVYVTAYRVEDLPRSSKGARDPFVTCEFAGCKLKSTQARGCCSHTFNECFRFPVVTPLPEDAILIKIWDWNFMKADELIAVGRISFSELRTRQMVPRWFNLYGFDDEEVAQATKVAGQGGRLVANCYLGRILLGARAERLTKEDDLMPAHTVAARPYETPPVIPLAVLADVYEVQGAPGEKVSVEIWCGPARARTKWVTGLETKAAQRAGVAPQAFNRAMEGALGVASYLRGDIPEGEDRFPFDNTEGRVEDLRLVVPEDTKQQWDIIISLYVRGTTKGFMGDTRIAFQRLKMSKIPGHVHNNPRAPIWVPLISTPPFESVKPAPAILMVIEKSKVEAFARSKRKHVTAVGYQLRAYVYAARNLLSPSGALPNPFVQVACAGTSRETEVFEQTSSPVFMDCLLLDITMMTDPVSRLPTVAPIVVTLFEQRSWGIQFLGRATCHYDRLRGRLKPGESPTVAEPRWIKLRGGKYANRHLGDVLLLLELIRKRDAEIIPAFPMRPVVNMCNLTFSCLGVRSLYMTQRAKRLDYVSIRKGQDKKTELRRIRGPLLRISVSSYASAGRGNNEAILRYERNLPEDPTTVNKLWTTVTKAANADIFKVVNMEIDVPVDPIYDPRLVVQVYDRKQKPKYFIGEYSMSLVPLIPWVLDQQSAIEAVSPVNDFTDTVDLKHLGGLLRGFHGNSKNRGTGQIGLEALSAADRETADAHKEKTLAQSRFATYDPDNKTFSDSWLLPSGLPKILVSSYAVPGFRCDVIYTNMFTLNVYIPAKFVLFAEGKRAADKKTKEQYARPSVDSTLEQFLDDVIFPSDSLKKSVMGDIDVTGFVKFFVNLTHHEEPNPHVDSSAAEWASSEDRMRRHLRGEDAYPKLLKIRVYVIRAISLYVGDDRILPNPYLLFNLGDKSDTLRAEAKPNTHNPEFFTVWEKDVMFPDDSQFELQVWSAHEGTSGGLDDIFIGSTCIDLEERWFSKEWQKSMSKNQVPMEYRPLKQMPSGSFKGTVEMWVELMDFQKAGEVPKFDLQSPAATEVEIRVIVWGARNLNFKALGKDFVDAMIRCNLDCTGYRGSQPIAQQTDVHYYSKTGAAIFNWRMVYSRVVMPVSTCVLQIAAYDNRNMGESPFIGEVNLELRRYLERVASTLNSIDVDAELKLINRSRESADVSSFGFVQVSLQFISQSEATSKPVGLGREPPNRDPRLTTPQEGRKWEDVLGSAGLRVDYRPLWYWVRVAAVVFLSIWIFVVAFLYPSLLG.

C2 domains lie at 1-111 (MGKT…QIRK), 161-279 (RKAV…PRWF), 512-638 (EKSK…ESPT), 1031-1154 (SEDR…QKSM), and 1189-1318 (KAGE…TLNS). The disordered stretch occupies residues 1357 to 1377 (SKPVGLGREPPNRDPRLTTPQ). A compositionally biased stretch (basic and acidic residues) spans 1366–1377 (PPNRDPRLTTPQ). The chain crosses the membrane as a helical span at residues 1404–1424 (VAAVVFLSIWIFVVAFLYPSL).

Belongs to the ferlin family.

The protein localises to the membrane. The protein resides in the inner membrane complex. It is found in the cytoplasmic vesicle. Its subcellular location is the secretory vesicle. It localises to the rhoptry. In terms of biological role, regulates rhoptry secretion. Required for completing the lytic cycle. Required for host cell invasion. Not required for microneme secretion and conoid extrusion. The chain is Ferlin 2 from Toxoplasma gondii.